A 279-amino-acid chain; its full sequence is Bifunctional protein FolD (279 aa).

Residues 158 to 160 (GRS), S183, and I224 each bind NADP(+).

Belongs to the tetrahydrofolate dehydrogenase/cyclohydrolase family. As to quaternary structure, homodimer.

The catalysed reaction is (6R)-5,10-methylene-5,6,7,8-tetrahydrofolate + NADP(+) = (6R)-5,10-methenyltetrahydrofolate + NADPH. It carries out the reaction (6R)-5,10-methenyltetrahydrofolate + H2O = (6R)-10-formyltetrahydrofolate + H(+). The protein operates within one-carbon metabolism; tetrahydrofolate interconversion. Functionally, catalyzes the oxidation of 5,10-methylenetetrahydrofolate to 5,10-methenyltetrahydrofolate and then the hydrolysis of 5,10-methenyltetrahydrofolate to 10-formyltetrahydrofolate. This is Bifunctional protein FolD from Caldicellulosiruptor saccharolyticus (strain ATCC 43494 / DSM 8903 / Tp8T 6331).